The sequence spans 329 residues: Ketol-acid reductoisomerase (NADP(+)) (329 aa).

The region spanning 2-182 (TQLFYDTDAD…GGTRAGILET (181 aa)) is the KARI N-terminal Rossmann domain. Residues 25–28 (YGSQ), serine 51, serine 53, and 83–86 (DEFQ) each bind NADP(+). Histidine 108 is an active-site residue. An NADP(+)-binding site is contributed by glycine 134. One can recognise a KARI C-terminal knotted domain in the interval 183-328 (NFKEETETDL…KGLRSMFSWL (146 aa)). Mg(2+)-binding residues include aspartate 191, glutamate 195, glutamate 227, and glutamate 231. Position 252 (serine 252) interacts with substrate.

It belongs to the ketol-acid reductoisomerase family. Mg(2+) serves as cofactor.

It catalyses the reaction (2R)-2,3-dihydroxy-3-methylbutanoate + NADP(+) = (2S)-2-acetolactate + NADPH + H(+). The catalysed reaction is (2R,3R)-2,3-dihydroxy-3-methylpentanoate + NADP(+) = (S)-2-ethyl-2-hydroxy-3-oxobutanoate + NADPH + H(+). The protein operates within amino-acid biosynthesis; L-isoleucine biosynthesis; L-isoleucine from 2-oxobutanoate: step 2/4. Its pathway is amino-acid biosynthesis; L-valine biosynthesis; L-valine from pyruvate: step 2/4. Its function is as follows. Involved in the biosynthesis of branched-chain amino acids (BCAA). Catalyzes an alkyl-migration followed by a ketol-acid reduction of (S)-2-acetolactate (S2AL) to yield (R)-2,3-dihydroxy-isovalerate. In the isomerase reaction, S2AL is rearranged via a Mg-dependent methyl migration to produce 3-hydroxy-3-methyl-2-ketobutyrate (HMKB). In the reductase reaction, this 2-ketoacid undergoes a metal-dependent reduction by NADPH to yield (R)-2,3-dihydroxy-isovalerate. This Prochlorococcus marinus (strain AS9601) protein is Ketol-acid reductoisomerase (NADP(+)).